The chain runs to 301 residues: Homoserine O-acetyltransferase (301 aa).

Residue C142 is the Acyl-thioester intermediate of the active site. Substrate-binding residues include K163 and S192. Catalysis depends on H235, which acts as the Proton acceptor. E237 is a catalytic residue. Position 249 (R249) interacts with substrate.

Belongs to the MetA family.

It is found in the cytoplasm. The catalysed reaction is L-homoserine + acetyl-CoA = O-acetyl-L-homoserine + CoA. It participates in amino-acid biosynthesis; L-methionine biosynthesis via de novo pathway; O-acetyl-L-homoserine from L-homoserine: step 1/1. In terms of biological role, transfers an acetyl group from acetyl-CoA to L-homoserine, forming acetyl-L-homoserine. The sequence is that of Homoserine O-acetyltransferase from Bacillus mycoides (strain KBAB4) (Bacillus weihenstephanensis).